Consider the following 173-residue polypeptide: Putative metal-dependent hydrolase BC_2708 (173 aa).

Residues His65, His156, and His160 each coordinate Zn(2+).

The protein belongs to the metal hydrolase YfiT family. As to quaternary structure, homodimer. The cofactor is Zn(2+).

The protein resides in the cytoplasm. Possible metal-dependent hydrolase. This chain is Putative metal-dependent hydrolase BC_2708, found in Bacillus cereus (strain ATCC 14579 / DSM 31 / CCUG 7414 / JCM 2152 / NBRC 15305 / NCIMB 9373 / NCTC 2599 / NRRL B-3711).